The following is a 914-amino-acid chain: Inter-alpha-trypsin inhibitor heavy chain H1 (914 aa).

The N-terminal stretch at 1–30 is a signal peptide; the sequence is MDGAAVGLRVLLGLGLVSLLTLEAMPAAWG. Residues 31-36 constitute a propeptide that is removed on maturation; sequence LATTGR. Residues 39–168 enclose the VIT domain; it reads AREKRQAVDT…KATFQLTYEE (130 aa). C62 carries an S-linked (Hex...) cysteine glycan. S131 carries the phosphoserine modification. N288 and N291 each carry an N-linked (GlcNAc...) asparagine glycan. A VWFA domain is found at 293-453; that stretch reads SKNLVFVIDI…FNFLEVMSME (161 aa). Phosphothreonine occurs at positions 405 and 410. The N-linked (GlcNAc...) asparagine glycan is linked to N591. The O-linked (GalNAc...) threonine glycan is linked to T656. Residue D675 is modified to Aspartate 1-(chondroitin 4-sulfate)-ester. Residues 676–914 constitute a propeptide that is removed on maturation; sequence PHFIIYVPQK…HTDYIVPDIF (239 aa).

Belongs to the ITIH family. I-alpha-I plasma protease inhibitors are assembled from one or two heavy chains (HC) and one light chain, bikunin. Inter-alpha-inhibitor (I-alpha-I) is composed of ITIH1/HC1, ITIH2/HC2 and bikunin. Interacts with TNFAIP6 (via Link and CUB domains). In terms of processing, heavy chains are linked to bikunin via chondroitin 4-sulfate esterified to the alpha-carboxyl of the C-terminal aspartate after propeptide cleavage. Post-translationally, the S-linked glycan is composed of two 6-carbon sugars, possibly Glc or Gal.

The protein localises to the secreted. Functionally, may act as a carrier of hyaluronan in serum or as a binding protein between hyaluronan and other matrix protein, including those on cell surfaces in tissues to regulate the localization, synthesis and degradation of hyaluronan which are essential to cells undergoing biological processes. The chain is Inter-alpha-trypsin inhibitor heavy chain H1 (ITIH1) from Mesocricetus auratus (Golden hamster).